A 477-amino-acid polypeptide reads, in one-letter code: Dihydrolipoyl dehydrogenase 3 (477 aa).

Residues 39–47 (EKGEYGGAC), lysine 56, and alanine 118 contribute to the FAD site. A disulfide bridge links cysteine 47 with cysteine 52. Residues 186–190 (GAGYI), glutamate 209, and 279–282 (AVGR) contribute to the NAD(+) site. Positions 322 and 330 each coordinate FAD. The active-site Proton acceptor is histidine 454.

It belongs to the class-I pyridine nucleotide-disulfide oxidoreductase family. In terms of assembly, homodimer. FAD serves as cofactor.

The protein resides in the cytoplasm. The enzyme catalyses N(6)-[(R)-dihydrolipoyl]-L-lysyl-[protein] + NAD(+) = N(6)-[(R)-lipoyl]-L-lysyl-[protein] + NADH + H(+). In Haloarcula marismortui (strain ATCC 43049 / DSM 3752 / JCM 8966 / VKM B-1809) (Halobacterium marismortui), this protein is Dihydrolipoyl dehydrogenase 3 (lpdA3).